A 446-amino-acid polypeptide reads, in one-letter code: Tripartite motif-containing protein 43B (446 aa).

The RING-type zinc finger occupies Cys-15–Arg-56. The B box-type zinc-finger motif lies at Ser-88–Ile-129. Cys-93, His-96, Cys-115, and His-121 together coordinate Zn(2+). Coiled coils occupy residues Ile-129–Leu-158 and Leu-190–Asp-220. Residues Glu-269–Arg-446 form the B30.2/SPRY domain.

Belongs to the TRIM/RBCC family.

In Homo sapiens (Human), this protein is Tripartite motif-containing protein 43B (TRIM43B).